Here is a 651-residue protein sequence, read N- to C-terminus: Acetyl-coenzyme A synthetase (651 aa).

CoA contacts are provided by residues 191-194 (RGGK), Thr-311, and Asn-335. ATP-binding positions include 387–389 (GEP), 411–416 (DTWWQT), Asp-500, and Arg-515. Ser-523 is a CoA binding site. ATP is bound at residue Arg-526. Positions 537, 539, and 542 each coordinate Mg(2+). Arg-584 is a binding site for CoA. Lys-609 is modified (N6-acetyllysine).

Belongs to the ATP-dependent AMP-binding enzyme family. Mg(2+) serves as cofactor. In terms of processing, acetylated. Deacetylation by the SIR2-homolog deacetylase activates the enzyme.

The catalysed reaction is acetate + ATP + CoA = acetyl-CoA + AMP + diphosphate. Functionally, catalyzes the conversion of acetate into acetyl-CoA (AcCoA), an essential intermediate at the junction of anabolic and catabolic pathways. AcsA undergoes a two-step reaction. In the first half reaction, AcsA combines acetate with ATP to form acetyl-adenylate (AcAMP) intermediate. In the second half reaction, it can then transfer the acetyl group from AcAMP to the sulfhydryl group of CoA, forming the product AcCoA. In Pseudomonas savastanoi pv. phaseolicola (strain 1448A / Race 6) (Pseudomonas syringae pv. phaseolicola (strain 1448A / Race 6)), this protein is Acetyl-coenzyme A synthetase.